Consider the following 254-residue polypeptide: Alcohol dehydrogenase (254 aa).

10–33 (FVAGLGGIGLDTSREIVKSGPKNL) provides a ligand contact to NAD(+). Serine 138 contacts substrate. Tyrosine 151 acts as the Proton acceptor in catalysis.

The protein belongs to the short-chain dehydrogenases/reductases (SDR) family. In terms of assembly, homodimer.

It carries out the reaction a primary alcohol + NAD(+) = an aldehyde + NADH + H(+). The catalysed reaction is a secondary alcohol + NAD(+) = a ketone + NADH + H(+). The protein is Alcohol dehydrogenase (Adh) of Drosophila grimshawi (Hawaiian fruit fly).